Reading from the N-terminus, the 82-residue chain is DNA-directed RNA polymerase subunit Rpo5 (82 aa).

It belongs to the archaeal Rpo5/eukaryotic RPB5 RNA polymerase subunit family. Part of the RNA polymerase complex.

It localises to the cytoplasm. The catalysed reaction is RNA(n) + a ribonucleoside 5'-triphosphate = RNA(n+1) + diphosphate. Functionally, DNA-dependent RNA polymerase (RNAP) catalyzes the transcription of DNA into RNA using the four ribonucleoside triphosphates as substrates. The protein is DNA-directed RNA polymerase subunit Rpo5 of Pyrococcus horikoshii (strain ATCC 700860 / DSM 12428 / JCM 9974 / NBRC 100139 / OT-3).